The primary structure comprises 264 residues: Thiazole synthase (264 aa).

Lys106 serves as the catalytic Schiff-base intermediate with DXP. Residues Gly167, 193 to 194, and 215 to 216 contribute to the 1-deoxy-D-xylulose 5-phosphate site; these read AG and NS.

This sequence belongs to the ThiG family. In terms of assembly, homotetramer. Forms heterodimers with either ThiH or ThiS.

Its subcellular location is the cytoplasm. It carries out the reaction [ThiS sulfur-carrier protein]-C-terminal-Gly-aminoethanethioate + 2-iminoacetate + 1-deoxy-D-xylulose 5-phosphate = [ThiS sulfur-carrier protein]-C-terminal Gly-Gly + 2-[(2R,5Z)-2-carboxy-4-methylthiazol-5(2H)-ylidene]ethyl phosphate + 2 H2O + H(+). It participates in cofactor biosynthesis; thiamine diphosphate biosynthesis. Its function is as follows. Catalyzes the rearrangement of 1-deoxy-D-xylulose 5-phosphate (DXP) to produce the thiazole phosphate moiety of thiamine. Sulfur is provided by the thiocarboxylate moiety of the carrier protein ThiS. In vitro, sulfur can be provided by H(2)S. This chain is Thiazole synthase, found in Prochlorococcus marinus (strain MIT 9215).